The sequence spans 383 residues: BRISC and BRCA1-A complex member 2 (383 aa).

M1 bears the N-acetylmethionine mark. S2 carries the phosphoserine modification. 2 UEV-like regions span residues 30–147 (DATN…TLLE) and 275–364 (IAAF…RAKA).

It belongs to the BABAM2 family. In terms of assembly, component of the ARISC complex, at least composed of UIMC1/RAP80, ABRAXAS1, BRCC3/BRCC36, BABAM2 and BABAM1/NBA1. Component of the BRCA1-A complex, at least composed of BRCA1, BARD1, UIMC1/RAP80, ABRAXAS1, BRCC3/BRCC36, BABAM2 and BABAM1/NBA1. In the BRCA1-A complex, interacts directly with ABRAXAS1, BRCC3/BRCC36 and BABAM1/NBA1. Binds polyubiquitin. Component of the BRISC complex, at least composed of ABRAXAS2, BRCC3/BRCC36, BABAM2 and BABAM1/NBA1. Identified in a complex with SHMT2 and the other subunits of the BRISC complex. Component of the BRCA1/BRCA2 containing complex (BRCC), which also contains BRCA1, BRCA2, BARD1, BRCC3/BRCC36 and RAD51. BRCC is a ubiquitin E3 ligase complex that enhances cellular survival following DNA damage. May interact with FAS and TNFRSF1A. As to expression, expressed in brain, heart, kidney, liver, lung, testis, germinal center B-cells and various mouse cell lines.

It is found in the cytoplasm. Its subcellular location is the nucleus. Component of the BRCA1-A complex, a complex that specifically recognizes 'Lys-63'-linked ubiquitinated histones H2A and H2AX at DNA lesions sites, leading to target the BRCA1-BARD1 heterodimer to sites of DNA damage at double-strand breaks (DSBs). The BRCA1-A complex also possesses deubiquitinase activity that specifically removes 'Lys-63'-linked ubiquitin on histones H2A and H2AX. In the BRCA1-A complex, it acts as an adapter that bridges the interaction between BABAM1/NBA1 and the rest of the complex, thereby being required for the complex integrity and modulating the E3 ubiquitin ligase activity of the BRCA1-BARD1 heterodimer. Probably also plays a role as a component of the BRISC complex, a multiprotein complex that specifically cleaves 'Lys-63'-linked ubiquitin. May regulate TNF-alpha signaling through its interactions with TNFRSF1A. In terms of biological role, component of the BRCA1-A complex, a complex that specifically recognizes 'Lys-63'-linked ubiquitinated histones H2A and H2AX at DNA lesions sites, leading to target the BRCA1-BARD1 heterodimer to sites of DNA damage at double-strand breaks (DSBs). The BRCA1-A complex also possesses deubiquitinase activity that specifically removes 'Lys-63'-linked ubiquitin on histones H2A and H2AX. In the BRCA1-A complex, it acts as an adapter that bridges the interaction between BABAM1/NBA1 and the rest of the complex, thereby being required for the complex integrity and modulating the E3 ubiquitin ligase activity of the BRCA1-BARD1 heterodimer. Component of the BRISC complex, a multiprotein complex that specifically cleaves 'Lys-63'-linked ubiquitin in various substrates. Within the BRISC complex, acts as an adapter that bridges the interaction between BABAM1/NBA1 and the rest of the complex, thereby being required for the complex integrity. The BRISC complex is required for normal mitotic spindle assembly and microtubule attachment to kinetochores via its role in deubiquitinating NUMA1. The BRISC complex plays a role in interferon signaling via its role in the deubiquitination of the interferon receptor IFNAR1; deubiquitination increases IFNAR1 activity by enhancing its stability and cell surface expression. Down-regulates the response to bacterial lipopolysaccharide (LPS) via its role in IFNAR1 deubiquitination. May play a role in homeostasis or cellular differentiation in cells of neural, epithelial and germline origins. May also act as a death receptor-associated anti-apoptotic protein, which inhibits the mitochondrial apoptotic pathway. May regulate TNF-alpha signaling through its interactions with TNFRSF1A; however these effects may be indirect. This chain is BRISC and BRCA1-A complex member 2 (Babam2), found in Mus musculus (Mouse).